The following is a 741-amino-acid chain: Hemolysin (741 aa).

An N-terminal signal peptide occupies residues Met1–Ala25. The propeptide occupies Asn26–Ala157. 3 disulfides stabilise this stretch: Cys182–Cys200, Cys497–Cys511, and Cys537–Cys549. A Ricin B-type lectin domain is found at Arg484–Leu575. Positions Asn607–Asn741 are beta-prism domain.

The protein belongs to the HlyA hemolysin family. As to quaternary structure, monomer. Homoheptamer. After binding to target membranes the protein assembles into a heptameric pre-pore complex. Proteolytic cleavage triggers a conformation change that is required for membrane insertion and pore formation. In terms of processing, proteolytical cleavage is required to convert the 80 kDa hemolysin precursor into the active 65 kDa hemolysin.

The protein localises to the secreted. It localises to the host cell membrane. Its function is as follows. Bacterial hemolysin that causes cytolysis by forming heptameric pores in target host membranes. The protein is Hemolysin (hlyA) of Vibrio cholerae serotype O1 (strain ATCC 39315 / El Tor Inaba N16961).